The chain runs to 102 residues: Putative pterin-4-alpha-carbinolamine dehydratase (102 aa).

Belongs to the pterin-4-alpha-carbinolamine dehydratase family.

It catalyses the reaction (4aS,6R)-4a-hydroxy-L-erythro-5,6,7,8-tetrahydrobiopterin = (6R)-L-erythro-6,7-dihydrobiopterin + H2O. This is Putative pterin-4-alpha-carbinolamine dehydratase from Burkholderia cenocepacia (strain HI2424).